The primary structure comprises 453 residues: Tubulin delta chain (453 aa).

Position 143–149 (143–149) interacts with GTP; that stretch reads AGGTGSG.

It belongs to the tubulin family. In terms of assembly, found in a complex with TEDC1, TEDC2, TUBE1 and TUBD1.

It localises to the nucleus. The protein resides in the cytoplasm. The protein localises to the cytoskeleton. Its subcellular location is the microtubule organizing center. It is found in the centrosome. It localises to the centriole. The protein resides in the cell projection. The protein localises to the cilium. Its function is as follows. Acts as a positive regulator of hedgehog signaling and regulates ciliary function. The protein is Tubulin delta chain (TUBD1) of Homo sapiens (Human).